A 166-amino-acid polypeptide reads, in one-letter code: NAD(P)H-quinone oxidoreductase subunit I, chloroplastic (166 aa).

4Fe-4S ferredoxin-type domains lie at 55–84 (GRIHFEFDKCIACEVCVRVCPIDLPVVDWK) and 95–124 (LNYSIDFGICIFCGNCVEYCPTNCLSMTEE). The [4Fe-4S] cluster site is built by Cys64, Cys67, Cys70, Cys74, Cys104, Cys107, Cys110, and Cys114.

Belongs to the complex I 23 kDa subunit family. NDH is composed of at least 16 different subunits, 5 of which are encoded in the nucleus. The cofactor is [4Fe-4S] cluster.

The protein localises to the plastid. Its subcellular location is the chloroplast thylakoid membrane. It carries out the reaction a plastoquinone + NADH + (n+1) H(+)(in) = a plastoquinol + NAD(+) + n H(+)(out). The catalysed reaction is a plastoquinone + NADPH + (n+1) H(+)(in) = a plastoquinol + NADP(+) + n H(+)(out). In terms of biological role, NDH shuttles electrons from NAD(P)H:plastoquinone, via FMN and iron-sulfur (Fe-S) centers, to quinones in the photosynthetic chain and possibly in a chloroplast respiratory chain. The immediate electron acceptor for the enzyme in this species is believed to be plastoquinone. Couples the redox reaction to proton translocation, and thus conserves the redox energy in a proton gradient. In Picradeniopsis absinthifolia (Hairyseed bahia), this protein is NAD(P)H-quinone oxidoreductase subunit I, chloroplastic.